The following is a 502-amino-acid chain: Glutamate decarboxylase 1 (502 aa).

Residue Ser8 is modified to Phosphoserine. N6-(pyridoxal phosphate)lysine is present on Lys277. The tract at residues 469–502 is calmodulin-binding; the sequence is LMVTVKKSDIDKQRDIITGWKKFVADRKKTSGIC.

This sequence belongs to the group II decarboxylase family. As to quaternary structure, homohexamer. Interacts with calmodulin with a 1:3 stoichiometry. Pyridoxal 5'-phosphate serves as cofactor. As to expression, expressed in roots. Detected at low levels in shoots of young seedlings. Not detected in the root tips or in the central vascular bundle in the elongating region of mature roots.

The enzyme catalyses L-glutamate + H(+) = 4-aminobutanoate + CO2. With respect to regulation, up-regulated by calmodulin binding at physiological pH. In terms of biological role, catalyzes the conversion of glutamate to 4-aminobutanoate (GABA). The calmodulin-binding is calcium-dependent and it is proposed to directly or indirectly form a calcium regulated control of GABA biosynthesis. The chain is Glutamate decarboxylase 1 (GAD1) from Arabidopsis thaliana (Mouse-ear cress).